The following is a 349-amino-acid chain: Peroxidase 22 (349 aa).

Positions 1 to 29 (MGFSPSFSCSAIGALILGCLLLQASNSNA) are cleaved as a signal peptide. Gln30 is modified (pyrrolidone carboxylic acid). Disulfide bonds link Cys40-Cys120, Cys73-Cys78, Cys126-Cys329, and Cys206-Cys238. His71 acts as the Proton acceptor in catalysis. The Ca(2+) site is built by Asp72, Val75, Gly77, Asp79, and Ser81. Asn86 carries N-linked (GlcNAc...) asparagine glycosylation. Pro168 contacts substrate. N-linked (GlcNAc...) asparagine glycans are attached at residues Asn173 and Asn187. His199 lines the heme b pocket. Thr200 provides a ligand contact to Ca(2+). N-linked (GlcNAc...) asparagine glycans are attached at residues Asn217 and Asn243. Positions 251, 254, and 259 each coordinate Ca(2+).

Belongs to the peroxidase family. Classical plant (class III) peroxidase subfamily. Heme b is required as a cofactor. It depends on Ca(2+) as a cofactor. In terms of tissue distribution, mainly expressed in roots.

It is found in the secreted. The protein localises to the vacuole. The enzyme catalyses 2 a phenolic donor + H2O2 = 2 a phenolic radical donor + 2 H2O. Its function is as follows. Removal of H(2)O(2), oxidation of toxic reductants, biosynthesis and degradation of lignin, suberization, auxin catabolism, response to environmental stresses such as wounding, pathogen attack and oxidative stress. These functions might be dependent on each isozyme/isoform in each plant tissue. The sequence is that of Peroxidase 22 (PER22) from Arabidopsis thaliana (Mouse-ear cress).